Consider the following 338-residue polypeptide: Putative peptide import ATP-binding protein BruAb2_0796 (338 aa).

Residues 7-263 form the ABC transporter domain; sequence LDIEGLRTVF…PRHPYTMGLL (257 aa). 43-50 contributes to the ATP binding site; that stretch reads GESGSGKS.

It belongs to the ABC transporter superfamily. As to quaternary structure, the complex is composed of two ATP-binding proteins (BruAb2_0796 and BruAb2_0797), two transmembrane proteins (BruAb2_0794) and a solute-binding protein (BruAb2_0792).

The protein resides in the cell inner membrane. Functionally, probably part of an ABC transporter complex that could be involved in peptide import. Probably responsible for energy coupling to the transport system. This Brucella abortus biovar 1 (strain 9-941) protein is Putative peptide import ATP-binding protein BruAb2_0796.